The primary structure comprises 581 residues: Proline--tRNA ligase (581 aa).

It belongs to the class-II aminoacyl-tRNA synthetase family. ProS type 1 subfamily. Homodimer.

Its subcellular location is the cytoplasm. It carries out the reaction tRNA(Pro) + L-proline + ATP = L-prolyl-tRNA(Pro) + AMP + diphosphate. In terms of biological role, catalyzes the attachment of proline to tRNA(Pro) in a two-step reaction: proline is first activated by ATP to form Pro-AMP and then transferred to the acceptor end of tRNA(Pro). As ProRS can inadvertently accommodate and process non-cognate amino acids such as alanine and cysteine, to avoid such errors it has two additional distinct editing activities against alanine. One activity is designated as 'pretransfer' editing and involves the tRNA(Pro)-independent hydrolysis of activated Ala-AMP. The other activity is designated 'posttransfer' editing and involves deacylation of mischarged Ala-tRNA(Pro). The misacylated Cys-tRNA(Pro) is not edited by ProRS. The protein is Proline--tRNA ligase of Blochmanniella pennsylvanica (strain BPEN).